The sequence spans 256 residues: Probable aquaporin TIP5-1 (256 aa).

M1 is modified (N-acetylmethionine). Transmembrane regions (helical) follow at residues 24 to 44 (CYVSEFISTFFFVLAAVGSVM), 57 to 77 (PFGVLIPAIANALALSSSVYI), 89 to 109 (AVTFAMAVAGRISVPTAMFYW), 144 to 164 (FGASVLEGVLAFVLVYTVFTA), and 171 to 191 (LPLAVGPIFIGFVAGANVLAA). Residues 87–89 (NPA) carry the NPA 1 motif. The short motif at 200–202 (NPA) is the NPA 2 element. The chain crosses the membrane as a helical span at residues 222–242 (VGPLLGGATAALVYDNVVVPV). Residue S249 is modified to Phosphoserine.

This sequence belongs to the MIP/aquaporin (TC 1.A.8) family. TIP (TC 1.A.8.10) subfamily.

It localises to the membrane. Potential aquaporin, which may facilitate the transport of water and small neutral solutes across cell membranes. This chain is Probable aquaporin TIP5-1 (TIP5-1), found in Arabidopsis thaliana (Mouse-ear cress).